A 99-amino-acid chain; its full sequence is Integration host factor subunit alpha (99 aa).

Belongs to the bacterial histone-like protein family. As to quaternary structure, heterodimer of an alpha and a beta chain.

This protein is one of the two subunits of integration host factor, a specific DNA-binding protein that functions in genetic recombination as well as in transcriptional and translational control. The polypeptide is Integration host factor subunit alpha (Pseudoalteromonas translucida (strain TAC 125)).